We begin with the raw amino-acid sequence, 136 residues long: Large ribosomal subunit protein uL16 (136 aa).

This sequence belongs to the universal ribosomal protein uL16 family. Part of the 50S ribosomal subunit.

Its function is as follows. Binds 23S rRNA and is also seen to make contacts with the A and possibly P site tRNAs. This is Large ribosomal subunit protein uL16 from Ruthia magnifica subsp. Calyptogena magnifica.